The chain runs to 678 residues: Protein mono-ADP-ribosyltransferase PARP15 (678 aa).

A compositionally biased stretch (low complexity) spans 1 to 19 (MAAPGPLPAAALSPGAPTP). Residues 1–67 (MAAPGPLPAA…SSRSMSRDNK (67 aa)) are disordered. Positions 49-58 (GARKASRRSS) are enriched in basic residues. Macro domains lie at 78 to 267 (NVVA…TNWS) and 293 to 464 (CFTA…KKRD). Residues 312–313 (DI), 324–325 (ST), R331, V335, 409–413 (GTGNA), and Q449 each bind substrate. The PARP catalytic domain maps to 482–678 (LPEHWTDMNH…YPEYLITFTA (197 aa)).

It belongs to the ARTD/PARP family.

It is found in the nucleus. The enzyme catalyses L-aspartyl-[protein] + NAD(+) = 4-O-(ADP-D-ribosyl)-L-aspartyl-[protein] + nicotinamide. It carries out the reaction L-glutamyl-[protein] + NAD(+) = 5-O-(ADP-D-ribosyl)-L-glutamyl-[protein] + nicotinamide. In terms of biological role, mono-ADP-ribosyltransferase that mediates mono-ADP-ribosylation of target proteins. Acts as a negative regulator of transcription. This chain is Protein mono-ADP-ribosyltransferase PARP15, found in Homo sapiens (Human).